Reading from the N-terminus, the 281-residue chain is ADSGSAVVALTNDRDTSYYGEIGIGTPPQKFTVIFDTGSSVLWVPSSKAHSMYESSGSSTYKSQDSVTIGDLVVKEQDFIEATEEADNVFLNRLFDGILGLSFQTISVPVWYNMLNQGLVKRFSFWLNRNVDEEEGGELVFGGLDPNHFRGDHTYVPVTYQYYWQFGIGDVLIGDKSTGFCAPGCQAFADSGTSLLSGPTAIVTQINHAIGANGSEELNVKFGLTPEQYILKGEATQCISGFTAMDATLLGPLWILGDVFMRPYHTVFDYGNLLVGFAEAA.

Positions 18–278 (YYGEIGIGTP…DYGNLLVGFA (261 aa)) constitute a Peptidase A1 domain. Residue Asp-36 is part of the active site. A disulfide bridge connects residues Cys-181 and Cys-185. The active site involves Asp-190. N-linked (GlcNAc...) asparagine glycosylation is present at Asn-213.

It belongs to the peptidase A1 family. In terms of assembly, heterodimer of a light chain and a heavy chain. An intermediate form is produced first, and undergoes proteolytic processing to remove the internal plant-specific insert (PSI) and the propeptide. Post-translationally, N-glycosylated. Pistils.

It is found in the microsome membrane. Its subcellular location is the protein storage vacuole. The protein localises to the secreted. The protein resides in the cell wall. It localises to the extracellular space. It is found in the extracellular matrix. Inhibited by pepstatin. In terms of biological role, aspartic protease with a high preference for bonds between hydrophobic residues. The protein is Cardosin-F of Cynara cardunculus (Cardoon).